A 421-amino-acid chain; its full sequence is Dihydroorotase (421 aa).

Zn(2+) contacts are provided by H60 and H62. Substrate contacts are provided by residues 62–64 (HFR) and N94. Positions 151, 178, and 231 each coordinate Zn(2+). N277 contributes to the substrate binding site. D304 contributes to the Zn(2+) binding site. Residue D304 is part of the active site. H308 lines the substrate pocket.

It belongs to the metallo-dependent hydrolases superfamily. DHOase family. Class I DHOase subfamily. The cofactor is Zn(2+).

The catalysed reaction is (S)-dihydroorotate + H2O = N-carbamoyl-L-aspartate + H(+). It participates in pyrimidine metabolism; UMP biosynthesis via de novo pathway; (S)-dihydroorotate from bicarbonate: step 3/3. Its function is as follows. Catalyzes the reversible cyclization of carbamoyl aspartate to dihydroorotate. The polypeptide is Dihydroorotase (Clostridioides difficile (strain 630) (Peptoclostridium difficile)).